A 171-amino-acid chain; its full sequence is ATP synthase subunit b (171 aa).

Residues 12 to 34 (FALNLNLFETNVINLAVVAFGLY) form a helical membrane-spanning segment.

This sequence belongs to the ATPase B chain family. F-type ATPases have 2 components, F(1) - the catalytic core - and F(0) - the membrane proton channel. F(1) has five subunits: alpha(3), beta(3), gamma(1), delta(1), epsilon(1). F(0) has four main subunits: a(1), b(1), b'(1) and c(10-14). The alpha and beta chains form an alternating ring which encloses part of the gamma chain. F(1) is attached to F(0) by a central stalk formed by the gamma and epsilon chains, while a peripheral stalk is formed by the delta, b and b' chains.

It is found in the cellular thylakoid membrane. Functionally, f(1)F(0) ATP synthase produces ATP from ADP in the presence of a proton or sodium gradient. F-type ATPases consist of two structural domains, F(1) containing the extramembraneous catalytic core and F(0) containing the membrane proton channel, linked together by a central stalk and a peripheral stalk. During catalysis, ATP synthesis in the catalytic domain of F(1) is coupled via a rotary mechanism of the central stalk subunits to proton translocation. Its function is as follows. Component of the F(0) channel, it forms part of the peripheral stalk, linking F(1) to F(0). The protein is ATP synthase subunit b of Prochlorococcus marinus (strain SARG / CCMP1375 / SS120).